Reading from the N-terminus, the 487-residue chain is MKYKDLRDFLAQLERQGELKRVAVEIDPHLEMTEICDRLLKAGGPAVLFEKSRGHDIPVLGNLFGTPKRVAMGMGQDSVEALREVGKLLAYLKEPDPPKGLKDAWEKLPVLKQVLNMAPKELSRASCQEIVWEGKDVDLGKLPIQTCWPGDAGPLITWGLTVTKGPHKTRQNLGIYRQQVIAPNKVIMRWLAHRGGALDFRDFTLANPGQPYPIAVALGADPATILGAVTPVPDSLSEYQFAGLLRGAKTEIVKCLTHDLQVPASAEIVLEGYIHPDETAVEGPFGDHTGYYNEQETFPVFTIERITMRRDPIYHSTYTGKPPDEPAILGVALNEVFVPLLQKQFTEIVDFYLPPEGCSYRMAVVSMKKQYAGHAKRIMFGVWSFLRQFMYTKFIIVTDDDVNIRDWKEVIWAITTRVDPARDTLIVENTPIDYLDFASPVSGLGGKMGLDATNKWPGETSREWGKPITMDEVVKARVDGMWTDLDL.

Position 172 (N172) interacts with Mn(2+). Prenylated FMN contacts are provided by residues 175–177, 189–191, and 194–195; these read IYR, RWL, and RG. E238 is a Mn(2+) binding site. D287 serves as the catalytic Proton donor.

It belongs to the UbiD family. In terms of assembly, homohexamer. Requires prenylated FMN as cofactor. The cofactor is Mn(2+).

The protein resides in the cell membrane. The catalysed reaction is a 4-hydroxy-3-(all-trans-polyprenyl)benzoate + H(+) = a 2-(all-trans-polyprenyl)phenol + CO2. Its pathway is cofactor biosynthesis; ubiquinone biosynthesis. In terms of biological role, catalyzes the decarboxylation of 3-octaprenyl-4-hydroxy benzoate to 2-octaprenylphenol, an intermediate step in ubiquinone biosynthesis. The chain is 3-octaprenyl-4-hydroxybenzoate carboxy-lyase from Nitrosospira multiformis (strain ATCC 25196 / NCIMB 11849 / C 71).